The primary structure comprises 345 residues: Protein-glutamate methylesterase/protein-glutamine glutaminase 2 (345 aa).

The Response regulatory domain occupies 7–124; it reads KVLVVDDSPV…TADMLGYRSL (118 aa). Position 58 is a 4-aspartylphosphate (Asp-58). Residues 154–345 enclose the CheB-type methylesterase domain; sequence STSQYQLIAI…LPQFLCDLLS (192 aa). Active-site residues include Ser-166, His-192, and Asp-289.

This sequence belongs to the CheB family. In terms of processing, phosphorylated by CheA. Phosphorylation of the N-terminal regulatory domain activates the methylesterase activity.

It localises to the cytoplasm. It carries out the reaction [protein]-L-glutamate 5-O-methyl ester + H2O = L-glutamyl-[protein] + methanol + H(+). The enzyme catalyses L-glutaminyl-[protein] + H2O = L-glutamyl-[protein] + NH4(+). Functionally, involved in chemotaxis. Part of a chemotaxis signal transduction system that modulates chemotaxis in response to various stimuli. Catalyzes the demethylation of specific methylglutamate residues introduced into the chemoreceptors (methyl-accepting chemotaxis proteins or MCP) by CheR. Also mediates the irreversible deamidation of specific glutamine residues to glutamic acid. The polypeptide is Protein-glutamate methylesterase/protein-glutamine glutaminase 2 (Vibrio vulnificus (strain YJ016)).